The primary structure comprises 173 residues: Photosystem I assembly protein Ycf3 (173 aa).

TPR repeat units lie at residues 35–68 (AYIY…EENK), 72–105 (GETL…NPKQ), and 120–153 (GRNA…YPGG).

Belongs to the Ycf3 family.

It is found in the cellular thylakoid membrane. Its function is as follows. Essential for the assembly of the photosystem I (PSI) complex. May act as a chaperone-like factor to guide the assembly of the PSI subunits. The chain is Photosystem I assembly protein Ycf3 from Prochlorococcus marinus (strain MIT 9312).